We begin with the raw amino-acid sequence, 116 residues long: MKIVAFTLVAFVALAGASCPYAAPAAAYPAPVAPSGYPAPPCPTNYLFSCQPNLAPAPCAQEAPAYGSAGAYTEQVPHYVGNPSREQVQQFHQRIGMAALMEELRGLGQGIQGQQY.

The first 17 residues, 1-17, serve as a signal peptide directing secretion; it reads MKIVAFTLVAFVALAGA. Positions 36–73 constitute a VM domain; it reads GYPAPPCPTNYLFSCQPNLAPAPCAQEAPAYGSAGAYT.

The protein belongs to the vitelline membrane family.

Its subcellular location is the secreted. Its function is as follows. Major early eggshell protein. The protein is Vitelline membrane protein Vm32E of Drosophila santomea (Fruit fly).